The sequence spans 265 residues: Expansin-like A2 (265 aa).

Residues 1–21 (MLQGFLFLLSVVLLFSSSAAA) form the signal peptide. Residues 42–148 (SGACAYGSMA…RRVPCDYGNK (107 aa)) enclose the Expansin-like EG45 domain. N-linked (GlcNAc...) asparagine glycans are attached at residues Asn100 and Asn103. Residues 162 to 244 (NYLAIKLLYQ…NWEAGKSYDA (83 aa)) enclose the Expansin-like CBD domain.

It belongs to the expansin family. Expansin-like A subfamily.

The protein resides in the secreted. This chain is Expansin-like A2 (EXLA2), found in Arabidopsis thaliana (Mouse-ear cress).